The sequence spans 282 residues: MAGAGLIGIRRRIKSVTNIRKITKAMGLVSTAKLRKARVNLEINKKYYNEYKIILKDIINFIEDSNIYIDGNGSHKKLYVIFTSDSGLCGSFNINIINNVINEIKEDKENSLVIVIGQKGRMYLKKLGINTLAEYIEIPDVPTTKEARTIAKNIIKLYSSKEVGEVFLVYSEFYSPVKQQVLINKILPFTKENKSDNKYIEFNPPVTQLMDEILENYLKATILNCFSNSKASENGSRMTAMNGATDNANDLLDNLDLQFNRLRQSAITQEISEIVGGAEAQR.

Belongs to the ATPase gamma chain family. F-type ATPases have 2 components, CF(1) - the catalytic core - and CF(0) - the membrane proton channel. CF(1) has five subunits: alpha(3), beta(3), gamma(1), delta(1), epsilon(1). CF(0) has three main subunits: a, b and c.

The protein localises to the cell membrane. Produces ATP from ADP in the presence of a proton gradient across the membrane. The gamma chain is believed to be important in regulating ATPase activity and the flow of protons through the CF(0) complex. This chain is ATP synthase gamma chain, found in Clostridium botulinum (strain Kyoto / Type A2).